The primary structure comprises 122 residues: Large ribosomal subunit protein bL19c (122 aa).

The protein belongs to the bacterial ribosomal protein bL19 family.

It is found in the plastid. It localises to the chloroplast. In Gracilaria tenuistipitata var. liui (Red alga), this protein is Large ribosomal subunit protein bL19c.